Here is a 272-residue protein sequence, read N- to C-terminus: UPF0759 protein YecE (272 aa).

The protein belongs to the UPF0759 family.

This Escherichia coli (strain K12) protein is UPF0759 protein YecE (yecE).